A 428-amino-acid polypeptide reads, in one-letter code: Enolase (428 aa).

Glutamine 164 is a binding site for (2R)-2-phosphoglycerate. Glutamate 208 functions as the Proton donor in the catalytic mechanism. Mg(2+) contacts are provided by aspartate 245, glutamate 286, and aspartate 313. Lysine 338, arginine 367, serine 368, and lysine 389 together coordinate (2R)-2-phosphoglycerate. The active-site Proton acceptor is lysine 338.

It belongs to the enolase family. The cofactor is Mg(2+).

It is found in the cytoplasm. The protein localises to the secreted. It localises to the cell surface. It catalyses the reaction (2R)-2-phosphoglycerate = phosphoenolpyruvate + H2O. It functions in the pathway carbohydrate degradation; glycolysis; pyruvate from D-glyceraldehyde 3-phosphate: step 4/5. Catalyzes the reversible conversion of 2-phosphoglycerate (2-PG) into phosphoenolpyruvate (PEP). It is essential for the degradation of carbohydrates via glycolysis. The protein is Enolase of Pyrococcus abyssi (strain GE5 / Orsay).